Reading from the N-terminus, the 585-residue chain is Glutamate decarboxylase 2 (585 aa).

The segment at 1–24 is disordered; sequence MASPGSGFWSFGSEDGSADPENPG. A phosphoserine mark is found at serine 3, serine 6, serine 10, and serine 13. S-palmitoyl cysteine attachment occurs at residues cysteine 30 and cysteine 45. 181-183 serves as a coordination point for substrate; the sequence is QLS. Position 396 is an N6-(pyridoxal phosphate)lysine (lysine 396). Position 558 (arginine 558) interacts with substrate.

Belongs to the group II decarboxylase family. Homodimer. It depends on pyridoxal 5'-phosphate as a cofactor. Post-translationally, phosphorylated; which does not affect kinetic parameters or subcellular location. In terms of processing, palmitoylated; which is required for presynaptic clustering.

The protein localises to the cytoplasm. The protein resides in the cytosol. Its subcellular location is the cytoplasmic vesicle. It localises to the presynaptic cell membrane. It is found in the golgi apparatus membrane. The enzyme catalyses L-glutamate + H(+) = 4-aminobutanoate + CO2. In terms of biological role, catalyzes the production of GABA. The protein is Glutamate decarboxylase 2 (Gad2) of Mus musculus (Mouse).